The primary structure comprises 736 residues: Probable potassium transport system protein Kup 2 (736 aa).

A run of 12 helical transmembrane segments spans residues 1–21, 42–62, 84–104, 126–146, 156–176, 204–224, 239–259, 287–307, 334–354, 364–384, 390–410, and 414–434; these read MAIV…LYTA, MLSL…VLIA, GAWL…DSVL, LFDE…VILF, IGKV…IVGV, AAGI…EALY, WPFI…WMLA, AVIL…TGAF, LYIP…LAIF, YGLA…VYLW, VGAI…FIAS, and FLHG…VMYT. Disordered regions lie at residues 649 to 678 and 693 to 736; these read TDTA…DTTS and AEAR…KQKR. 2 stretches are compositionally biased toward low complexity: residues 660–677 and 700–709; these read PTRA…MDTT and EAAAADAPAE. Residues 710–721 are compositionally biased toward basic and acidic residues; it reads QGDKGDKGKAEN.

This sequence belongs to the HAK/KUP transporter (TC 2.A.72) family.

The protein resides in the cell membrane. The catalysed reaction is K(+)(in) + H(+)(in) = K(+)(out) + H(+)(out). Functionally, transport of potassium into the cell. Likely operates as a K(+):H(+) symporter. This chain is Probable potassium transport system protein Kup 2, found in Bifidobacterium longum (strain NCC 2705).